Reading from the N-terminus, the 1097-residue chain is Importin-5 (1097 aa).

Alanine 2 is subject to N-acetylalanine. 24 HEAT repeats span residues 5 to 38 (AAEQQQFYLLLGNLLSPDNVVRKQAEETYENIPG), 43 to 77 (TFLLQAIRNTTAAEEARQMAAVLLRRLLSSAFDEV), 95 to 122 (MIIQMETQSSMRKKVCDIAAELARNLID), 130 to 157 (PEGLKFLFDSVSSQNVGLREAALHIFWN), 167 to 201 (QHYLDVIKRMLVQCMQDQEHPSIRTLSARATAAFI), 210 to 246 (LFKHFADLLPGFLQAVNDSCYQNDDSVLKSLVEIADT), 254 to 289 (HLEATLQLSLKLCGDTSLNNMQRQLALEVIVTLSET), 298 to 350 (TNIV…ACGL), 352 to 386 (GKLVLPMIKEHIMQMLQNPDWKYRHAGLMALSAIG), 390 to 430 (HQQM…ATDF), 432 to 472 (PGFQ…FTED), 475 to 523 (KSLL…ADTA), 525 to 568 (EKFV…GLAV), 570 to 615 (KEKF…CKIL), 617 to 692 (KEFQ…AKEL), 695 to 737 (GFVE…ARVR), 741 to 780 (YLTQMWHFMCDALIKAIGTEPDSDVLSEIMHSFAKCIEVM), 787 to 853 (NEHF…FSSY), 856 to 895 (KVLPWFEQLLPLIVNLICPHRPWPDRQWGLCIFDDVIEHC), 903 to 935 (AEYFLRPMLQYVCDNSPEVRQAAAYGLGVMAQY), 943 to 983 (FCTE…MKFK), 990 to 1021 (EEVLPHWLSWLPLHEDKEEAVQTFNYLCDLIE), 1032 to 1067 (NTNLPKIFSIIAEGEMHEAIKHEDPCAKRLANVVRQ), and 1070 to 1093 (TSGGLWTECIAQLSPEQQAAIQEL). An Importin N-terminal domain is found at 28–99 (QAEETYENIP…KSELLMIIQM (72 aa)). A ran-GTP binding region spans residues 325–375 (DELEDDDFDSNAVAGESALDRMACGLGGKLVLPMIKEHIMQMLQNPDWKYR). At serine 827 the chain carries Phosphoserine.

This sequence belongs to the importin beta family. Importin beta-3 subfamily. Interacts with RPS7 and RPL5. Interacts with RPL23A (via BIB domain). Interacts with H2A, H2B, H3 and H4 histones. Interacts with CPEB3; this mediates CPEB3 nuclear import following neuronal stimulation which enhances the interaction in a RAN-regulated manner. Interacts with AIFM2; this interaction likely mediates the translocation of AIFM2 into the nucleus upon oxidative stress. Interacts with STX3 (isoform 3). Interacts with SRP19. In terms of assembly, (Microbial infection) Interacts with HIV-1 Rev.

Its subcellular location is the cytoplasm. It is found in the nucleus. The protein localises to the nucleolus. Its function is as follows. Functions in nuclear protein import as nuclear transport receptor. Serves as receptor for nuclear localization signals (NLS) in cargo substrates. Is thought to mediate docking of the importin/substrate complex to the nuclear pore complex (NPC) through binding to nucleoporin and the complex is subsequently translocated through the pore by an energy requiring, Ran-dependent mechanism. At the nucleoplasmic side of the NPC, Ran binds to the importin, the importin/substrate complex dissociates and importin is re-exported from the nucleus to the cytoplasm where GTP hydrolysis releases Ran. The directionality of nuclear import is thought to be conferred by an asymmetric distribution of the GTP- and GDP-bound forms of Ran between the cytoplasm and nucleus. Mediates the nuclear import of ribosomal proteins RPL23A, RPS7 and RPL5. In vitro, mediates nuclear import of H2A, H2B, H3 and H4 histones. Binds to CPEB3 and mediates its nuclear import following neuronal stimulation. In case of HIV-1 infection, binds and mediates the nuclear import of HIV-1 Rev. The sequence is that of Importin-5 (IPO5) from Homo sapiens (Human).